The primary structure comprises 1043 residues: NACHT, LRR and PYD domains-containing protein 13 (1043 aa).

A Pyrin domain is found at 1–107 (MNFSVITCPN…CEKVRAEMKE (107 aa)). The NACHT domain maps to 229-558 (QTIVLVGRAG…VLEEPREFPP (330 aa)). 235 to 242 (GRAGVGKT) is an ATP binding site. LRR repeat units lie at residues 725 to 749 (NENLHELDLSNSKLHASSVKGLCLA), 781 to 804 (NSKLTHLNFSSNKLGMTVPLILKA), 837 to 864 (IQHVTRLCLGFNRLQDDGIKLLCAALTH), 894 to 917 (NRSLTHLNLSKNSLRDEGVKFLCE), 923 to 946 (DGNLQSLNLSGCSFTREGCGELAN), 951 to 978 (NHNVKILDLGENDLQDDGVKLLCEALKP), and 1007 to 1030 (SKSLVNLNLLGNELDTDGVKMLCK).

This sequence belongs to the NLRP family.

Its function is as follows. Involved in inflammation. This Homo sapiens (Human) protein is NACHT, LRR and PYD domains-containing protein 13 (NLRP13).